The following is a 159-amino-acid chain: 3-hydroxyacyl-[acyl-carrier-protein] dehydratase FabZ (159 aa).

Residue histidine 58 is part of the active site.

Belongs to the thioester dehydratase family. FabZ subfamily.

The protein resides in the cytoplasm. The enzyme catalyses a (3R)-hydroxyacyl-[ACP] = a (2E)-enoyl-[ACP] + H2O. In terms of biological role, involved in unsaturated fatty acids biosynthesis. Catalyzes the dehydration of short chain beta-hydroxyacyl-ACPs and long chain saturated and unsaturated beta-hydroxyacyl-ACPs. The chain is 3-hydroxyacyl-[acyl-carrier-protein] dehydratase FabZ from Helicobacter pylori (strain P12).